The following is a 102-amino-acid chain: Large ribosomal subunit protein bL21 (102 aa).

Belongs to the bacterial ribosomal protein bL21 family. In terms of assembly, part of the 50S ribosomal subunit. Contacts protein L20.

Functionally, this protein binds to 23S rRNA in the presence of protein L20. The sequence is that of Large ribosomal subunit protein bL21 from Photorhabdus laumondii subsp. laumondii (strain DSM 15139 / CIP 105565 / TT01) (Photorhabdus luminescens subsp. laumondii).